A 611-amino-acid polypeptide reads, in one-letter code: Adenosylhomocysteinase 3 (611 aa).

3 stretches are compositionally biased toward low complexity: residues 1–14 (MSVQ…AAKV), 36–57 (AAVG…APAA), and 68–81 (GPAA…GKVP). The tract at residues 1-184 (MSVQVVSAAA…KQQKNSKGSS (184 aa)) is disordered. Ser2 is modified (N-acetylserine). The interval 2-109 (SVQVVSAAAA…DGGEALVSPD (108 aa)) is LISN domain, inhibits interaction with ITPR1. Ser107 carries the post-translational modification Phosphoserine. Basic residues predominate over residues 135 to 144 (RPTKIGRRSL). The span at 145–164 (SRSISQSSTDSYSSAASYTD) shows a compositional bias: low complexity. Ser149, Ser152, Ser155, and Ser158 each carry phosphoserine. Thr236, Asp310, and Glu335 together coordinate substrate. 336–338 (SVT) contacts NAD(+). Substrate is bound by residues Lys365 and Asp369. NAD(+)-binding positions include Asn370, 401 to 406 (GEVGKG), Glu422, Asn457, 478 to 479 (MG), and Asn525.

This sequence belongs to the adenosylhomocysteinase family. In terms of assembly, homotetramer. Forms heteromultimers with AHCYL1 (via the C-terminal region). Interacts with ITPR1; with lower affinity than AHCYL1 and maybe via ITPR1. Interacts with SLC4A4. Interacts with ZCCHC4. Requires NAD(+) as cofactor. In terms of processing, phosphorylated during neuronal differentiation at the LISN domain.

It is found in the cytoplasm. The protein resides in the microsome. It carries out the reaction S-adenosyl-L-homocysteine + H2O = L-homocysteine + adenosine. It participates in amino-acid biosynthesis; L-homocysteine biosynthesis; L-homocysteine from S-adenosyl-L-homocysteine: step 1/1. Functionally, may regulate the electrogenic sodium/bicarbonate cotransporter SLC4A4 activity and Mg(2+)-sensitivity. On the contrary of its homolog AHCYL1, does not regulate ITPR1 sensitivity to inositol 1,4,5-trisphosphate. This Homo sapiens (Human) protein is Adenosylhomocysteinase 3 (AHCYL2).